A 249-amino-acid chain; its full sequence is Putative TrmH family tRNA/rRNA methyltransferase (249 aa).

3 residues coordinate S-adenosyl-L-methionine: Gly-196, Ile-216, and Leu-225.

Belongs to the class IV-like SAM-binding methyltransferase superfamily. RNA methyltransferase TrmH family.

The chain is Putative TrmH family tRNA/rRNA methyltransferase from Staphylococcus saprophyticus subsp. saprophyticus (strain ATCC 15305 / DSM 20229 / NCIMB 8711 / NCTC 7292 / S-41).